Here is a 197-residue protein sequence, read N- to C-terminus: uncharacterized protein (197 aa).

The span at 168–185 shows a compositional bias: basic and acidic residues; that stretch reads QRDDFSEDSHANDPKLVG. The segment at 168–197 is disordered; sequence QRDDFSEDSHANDPKLVGDDYVPQAPEQIN.

This is an uncharacterized protein from Escherichia coli (strain K12).